Here is a 283-residue protein sequence, read N- to C-terminus: tRNA pseudouridine synthase A (283 aa).

D73 functions as the Nucleophile in the catalytic mechanism. The interval F120–F124 is RNA binding. Y131 is a substrate binding site. The tract at residues Q181 to R185 is interaction with tRNA.

This sequence belongs to the tRNA pseudouridine synthase TruA family. Homodimer.

The catalysed reaction is uridine(38/39/40) in tRNA = pseudouridine(38/39/40) in tRNA. Its function is as follows. Formation of pseudouridine at positions 38, 39 and 40 in the anticodon stem and loop of transfer RNAs. This chain is tRNA pseudouridine synthase A, found in Pectobacterium atrosepticum (strain SCRI 1043 / ATCC BAA-672) (Erwinia carotovora subsp. atroseptica).